Here is a 143-residue protein sequence, read N- to C-terminus: Ribonuclease H (143 aa).

The 141-residue stretch at 1–141 folds into the RNase H type-1 domain; it reads MKHVEIFTDG…VDKLASDAAL (141 aa). Residues Asp-9, Glu-47, Asp-69, and Asp-133 each contribute to the Mg(2+) site.

It belongs to the RNase H family. As to quaternary structure, monomer. It depends on Mg(2+) as a cofactor.

It localises to the cytoplasm. The catalysed reaction is Endonucleolytic cleavage to 5'-phosphomonoester.. Functionally, endonuclease that specifically degrades the RNA of RNA-DNA hybrids. This Novosphingobium aromaticivorans (strain ATCC 700278 / DSM 12444 / CCUG 56034 / CIP 105152 / NBRC 16084 / F199) protein is Ribonuclease H.